A 1500-amino-acid chain; its full sequence is ABC transporter G family member 42 (1500 aa).

The interval 26–56 (VDEAFMPQNSGGGGGSRGRRRSGRGGTADDD) is disordered. An ABC transporter 1 domain is found at 182 to 455 (LGLVGVRPGR…FESCGFRCPE (274 aa)). An ATP-binding site is contributed by 215 to 222 (GPPSSGKT). An ABC transmembrane type-2 1 domain is found at 533–746 (ELLKASFAKE…GYNALAVNEF (214 aa)). 7 consecutive transmembrane segments (helical) span residues 551–571 (FVYI…STVF), 584–604 (GFVY…NGFA), 639–659 (IPFS…TIGF), 670–690 (LLLV…TAGL), 695–715 (IIAQ…GGFL), 724–744 (WWIW…LAVN), and 783–803 (FWIG…LFTL). Basic and acidic residues predominate over residues 822–834 (TAKEAEGNGDARH). The disordered stretch occupies residues 822–850 (TAKEAEGNGDARHTVRNGSTKSNGGNHKE). Over residues 837–846 (RNGSTKSNGG) the composition is skewed to polar residues. The region spanning 894-1151 (MSFDDVNYYV…KMIEYFEAIP (258 aa)) is the ABC transporter 2 domain. ATP is bound at residue 939–946 (GVSGAGKT). Residues 1224 to 1438 (GQFRACLWKQ…TVYGLIVTQY (215 aa)) enclose the ABC transmembrane type-2 2 domain. A run of 7 helical transmembrane segments spans residues 1245 to 1265 (LVRF…FWKI), 1277 to 1297 (MVIG…CATV), 1331 to 1351 (IPYV…MMSF), 1358 to 1378 (FFWF…YGMM), 1388 to 1408 (VAAI…GFFI), 1416 to 1436 (WWIW…LIVT), and 1472 to 1492 (VVAP…AICI).

This sequence belongs to the ABC transporter superfamily. ABCG family. PDR (TC 3.A.1.205) subfamily.

Its subcellular location is the membrane. Its function is as follows. May be a general defense protein. The chain is ABC transporter G family member 42 from Oryza sativa subsp. japonica (Rice).